The following is a 545-amino-acid chain: Glucose-6-phosphate isomerase (545 aa).

Glutamate 351 functions as the Proton donor in the catalytic mechanism. Residues histidine 382 and lysine 510 contribute to the active site.

It belongs to the GPI family.

The protein resides in the cytoplasm. It catalyses the reaction alpha-D-glucose 6-phosphate = beta-D-fructose 6-phosphate. It participates in carbohydrate biosynthesis; gluconeogenesis. The protein operates within carbohydrate degradation; glycolysis; D-glyceraldehyde 3-phosphate and glycerone phosphate from D-glucose: step 2/4. Its function is as follows. Catalyzes the reversible isomerization of glucose-6-phosphate to fructose-6-phosphate. The sequence is that of Glucose-6-phosphate isomerase from Shewanella woodyi (strain ATCC 51908 / MS32).